We begin with the raw amino-acid sequence, 316 residues long: Beta-ketoacyl-[acyl-carrier-protein] synthase III 1 (316 aa).

Catalysis depends on residues C112 and H243. Residues 244–248 (QANYR) are ACP-binding. Residue N273 is part of the active site.

It belongs to the thiolase-like superfamily. FabH family. As to quaternary structure, homodimer.

It localises to the cytoplasm. The catalysed reaction is malonyl-[ACP] + acetyl-CoA + H(+) = 3-oxobutanoyl-[ACP] + CO2 + CoA. The protein operates within lipid metabolism; fatty acid biosynthesis. Functionally, catalyzes the condensation reaction of fatty acid synthesis by the addition to an acyl acceptor of two carbons from malonyl-ACP. Catalyzes the first condensation reaction which initiates fatty acid synthesis and may therefore play a role in governing the total rate of fatty acid production. Possesses both acetoacetyl-ACP synthase and acetyl transacylase activities. Its substrate specificity determines the biosynthesis of branched-chain and/or straight-chain of fatty acids. The chain is Beta-ketoacyl-[acyl-carrier-protein] synthase III 1 from Vibrio vulnificus (strain CMCP6).